Reading from the N-terminus, the 221-residue chain is MDRFVSIAGDPHIGVFTRVFDDIAVVPPDVPEEVTTRYEEALKVEIVRTTIQRSPIIGSLLVGNNNGLVITGMATEEEIATLSEYRDLMLLEEGMNAAGNIILANDHFAAVHPEMDEEFMDALSDFLKVPVIPLTLGDVKTVGMAAVATNSGVVVSPRTTPGEIQRLEQVCSLPVGKGTVTMGNAMVGTGLVANRYGYLAGVGTSGYELGRIEDILGFEEE.

Belongs to the eIF-6 family.

Functionally, binds to the 50S ribosomal subunit and prevents its association with the 30S ribosomal subunit to form the 70S initiation complex. In Methanospirillum hungatei JF-1 (strain ATCC 27890 / DSM 864 / NBRC 100397 / JF-1), this protein is Translation initiation factor 6.